We begin with the raw amino-acid sequence, 502 residues long: Glycerol kinase (502 aa).

Threonine 14 contributes to the ADP binding site. Threonine 14, threonine 15, and serine 16 together coordinate ATP. Threonine 14 contacts sn-glycerol 3-phosphate. Arginine 18 lines the ADP pocket. Sn-glycerol 3-phosphate contacts are provided by arginine 84, glutamate 85, tyrosine 136, and aspartate 246. 5 residues coordinate glycerol: arginine 84, glutamate 85, tyrosine 136, aspartate 246, and glutamine 247. Threonine 268 and glycine 311 together coordinate ADP. ATP is bound by residues threonine 268, glycine 311, glutamine 315, and glycine 412. 2 residues coordinate ADP: glycine 412 and asparagine 416.

It belongs to the FGGY kinase family. As to quaternary structure, homotetramer and homodimer (in equilibrium). Heterodimer with EIIA-Glc. Binds 1 zinc ion per glycerol kinase EIIA-Glc dimer. The zinc ion is important for dimerization.

It carries out the reaction glycerol + ATP = sn-glycerol 3-phosphate + ADP + H(+). Its pathway is polyol metabolism; glycerol degradation via glycerol kinase pathway; sn-glycerol 3-phosphate from glycerol: step 1/1. With respect to regulation, activity of this regulatory enzyme is affected by several metabolites. Allosterically and non-competitively inhibited by fructose 1,6-bisphosphate (FBP) and unphosphorylated phosphocarrier protein EIIA-Glc (III-Glc), an integral component of the bacterial phosphotransferase (PTS) system. Key enzyme in the regulation of glycerol uptake and metabolism. Catalyzes the phosphorylation of glycerol to yield sn-glycerol 3-phosphate. The polypeptide is Glycerol kinase (Shigella boydii serotype 18 (strain CDC 3083-94 / BS512)).